The following is a 424-amino-acid chain: Histidine--tRNA ligase (424 aa).

This sequence belongs to the class-II aminoacyl-tRNA synthetase family. As to quaternary structure, homodimer.

Its subcellular location is the cytoplasm. It catalyses the reaction tRNA(His) + L-histidine + ATP = L-histidyl-tRNA(His) + AMP + diphosphate + H(+). In Salmonella paratyphi B (strain ATCC BAA-1250 / SPB7), this protein is Histidine--tRNA ligase.